Here is a 429-residue protein sequence, read N- to C-terminus: Cyclin-B2-3 (429 aa).

A compositionally biased stretch (basic and acidic residues) spans 86–101 (ADHKPHIRDEETKKPD). Residues 86–109 (ADHKPHIRDEETKKPDSVSSEEPE) are disordered.

It belongs to the cyclin family. Cyclin AB subfamily.

The protein is Cyclin-B2-3 (CYCB2-3) of Arabidopsis thaliana (Mouse-ear cress).